Reading from the N-terminus, the 409-residue chain is Probable plastid-lipid-associated protein 12, chloroplastic (409 aa).

The transit peptide at 1–55 (MVAVRFYAVEMSLPCLCPCPSSPISLSLCSPRFNLLNTTSRRLGLSRNCRTLRIS) directs the protein to the chloroplast.

This sequence belongs to the PAP/fibrillin family.

The protein resides in the plastid. Its subcellular location is the chloroplast thylakoid. The chain is Probable plastid-lipid-associated protein 12, chloroplastic (PAP12) from Arabidopsis thaliana (Mouse-ear cress).